We begin with the raw amino-acid sequence, 294 residues long: MILLDGKKTAQDIKNEITAEVNKMKANGEKVPHLAALIVGSDGASLTYVGSKVKACELVGFESTLVKMPSTTSETELLKKIKELNQNDDIDGFIVQLPLPEQIDTQKVLMTIDPSKDVDGFHPENFGKMALDMTTFIPATPFGILELLERYGVETKGKHTVVIGRSHIVGRPMSILMGRKGFPGNSTVTLTHSYTKNIAQITTQADIIISALGVPNYLKAEMVKDGAVIIDVGITRVPDETNEKGYVITGDVDFENVSKKASHITPVPGGVGPMTIAMLLKNTLLAREQRKVNN.

Residues 164–166 (GRS), Ser193, and Ile234 contribute to the NADP(+) site.

It belongs to the tetrahydrofolate dehydrogenase/cyclohydrolase family. As to quaternary structure, homodimer.

The enzyme catalyses (6R)-5,10-methylene-5,6,7,8-tetrahydrofolate + NADP(+) = (6R)-5,10-methenyltetrahydrofolate + NADPH. The catalysed reaction is (6R)-5,10-methenyltetrahydrofolate + H2O = (6R)-10-formyltetrahydrofolate + H(+). It participates in one-carbon metabolism; tetrahydrofolate interconversion. Its function is as follows. Catalyzes the oxidation of 5,10-methylenetetrahydrofolate to 5,10-methenyltetrahydrofolate and then the hydrolysis of 5,10-methenyltetrahydrofolate to 10-formyltetrahydrofolate. This Flavobacterium psychrophilum (strain ATCC 49511 / DSM 21280 / CIP 103535 / JIP02/86) protein is Bifunctional protein FolD.